We begin with the raw amino-acid sequence, 366 residues long: MAP kinase-activated protein kinase 2 (366 aa).

The Protein kinase domain maps to 30–291; sequence KVTSQVLGLG…ITEFMNHPWI (262 aa). Residues 36–44 and K59 contribute to the ATP site; that span reads LGLGINGKV. Residue 105-107 participates in staurosporine binding; it reads ECL. The active-site Proton acceptor is the D152. A Phosphothreonine; by MAPK14 modification is found at T188. S238 bears the Phosphoserine; by MAPK14 mark. Position 294 is a phosphoserine; by autocatalysis (S294). An autoinhibitory helix region spans residues 294–330; that stretch reads STKVPQTPLHTSRVLKEDKERWEDVKEEMTSALATMR. At T300 the chain carries Phosphothreonine; by MAPK14. K319 participates in a covalent cross-link: Glycyl lysine isopeptide (Lys-Gly) (interchain with G-Cter in SUMO). Residues 322-331 carry the Nuclear export signal (NES) motif; the sequence is MTSALATMRV. The interval 332–356 is p38 MAPK-binding site; that stretch reads DYEQIKIKKIEDASNPLLLKRRKKA. 2 consecutive short sequence motifs (bipartite nuclear localization signal) follow at residues 337-340 and 351-355; these read KIKK and KRRKK.

It belongs to the protein kinase superfamily. CAMK Ser/Thr protein kinase family. As to quaternary structure, heterodimer with p38-alpha/MAPK14; this heterodimer forms a stable complex: molecules are positioned 'face to face' so that the ATP-binding sites of both kinases are at the heterodimer interface. Interacts with PHC2. Interacts with HSF1. In terms of processing, sumoylation inhibits the protein kinase activity. Phosphorylated and activated by MAP kinase p38-alpha/MAPK14 at Thr-188, Ser-238 and Thr-300.

The protein resides in the cytoplasm. It is found in the nucleus. The catalysed reaction is L-seryl-[protein] + ATP = O-phospho-L-seryl-[protein] + ADP + H(+). The enzyme catalyses L-threonyl-[protein] + ATP = O-phospho-L-threonyl-[protein] + ADP + H(+). Activated following phosphorylation by p38-alpha/MAPK14 following various stresses. Inhibited following sumoylation. Specifically inhibited by pyrrolopyridine inhibitors. Stress-activated serine/threonine-protein kinase involved in cytokine production, endocytosis, reorganization of the cytoskeleton, cell migration, cell cycle control, chromatin remodeling, DNA damage response and transcriptional regulation. Following stress, it is phosphorylated and activated by MAP kinase p38-alpha/MAPK14, leading to phosphorylation of substrates. Phosphorylates serine in the peptide sequence, Hyd-X-R-X(2)-S, where Hyd is a large hydrophobic residue. Phosphorylates ALOX5, CDC25B, CDC25C, CEP131, ELAVL1, HNRNPA0, HSP27/HSPB1, KRT18, KRT20, LIMK1, LSP1, PABPC1, PARN, PDE4A, RCSD1, RPS6KA3, TAB3 and TTP/ZFP36. Phosphorylates HSF1; leading to the interaction with HSP90 proteins and inhibiting HSF1 homotrimerization, DNA-binding and transactivation activities. Mediates phosphorylation of HSP27/HSPB1 in response to stress, leading to dissociation of HSP27/HSPB1 from large small heat-shock protein (sHsps) oligomers and impairment of their chaperone activities and ability to protect against oxidative stress effectively. Involved in inflammatory response by regulating tumor necrosis factor (TNF) and IL6 production post-transcriptionally: acts by phosphorylating AU-rich elements (AREs)-binding proteins ELAVL1, HNRNPA0, PABPC1 and TTP/ZFP36, leading to regulate the stability and translation of TNF and IL6 mRNAs. Phosphorylation of TTP/ZFP36, a major post-transcriptional regulator of TNF, promotes its binding to 14-3-3 proteins and reduces its ARE mRNA affinity leading to inhibition of dependent degradation of ARE-containing transcripts. Phosphorylates CEP131 in response to cellular stress following ultraviolet irradiation which promotes binding of CEP131 to 14-3-3 proteins and inhibits formation of novel centriolar satellites. Also involved in late G2/M checkpoint following DNA damage through a process of post-transcriptional mRNA stabilization: following DNA damage, relocalizes from nucleus to cytoplasm and phosphorylates HNRNPA0 and PARN, leading to stabilization of GADD45A mRNA. Involved in toll-like receptor signaling pathway (TLR) in dendritic cells: required for acute TLR-induced macropinocytosis by phosphorylating and activating RPS6KA3. The protein is MAP kinase-activated protein kinase 2 (MAPKAPK2) of Oryctolagus cuniculus (Rabbit).